We begin with the raw amino-acid sequence, 516 residues long: Cysteine--tRNA ligase (516 aa).

Residue cysteine 32 coordinates Zn(2+). The 'HIGH' region signature appears at 34–44 (PTVYMYAHIGN). 3 residues coordinate Zn(2+): cysteine 230, histidine 255, and glutamate 259. A 'KMSKS' region motif is present at residues 287-291 (KMSKS). An ATP-binding site is contributed by lysine 290.

The protein belongs to the class-I aminoacyl-tRNA synthetase family. As to quaternary structure, monomer. Zn(2+) serves as cofactor.

Its subcellular location is the cytoplasm. The catalysed reaction is tRNA(Cys) + L-cysteine + ATP = L-cysteinyl-tRNA(Cys) + AMP + diphosphate. This chain is Cysteine--tRNA ligase, found in Salinibacter ruber (strain DSM 13855 / M31).